We begin with the raw amino-acid sequence, 615 residues long: Elongation factor 4 (615 aa).

The region spanning 17–198 (ASIRNFCIIA…RVSRTIPAPV (182 aa)) is the tr-type G domain. Residues 29–34 (DHGKST) and 145–148 (NKID) contribute to the GTP site.

It belongs to the TRAFAC class translation factor GTPase superfamily. Classic translation factor GTPase family. LepA subfamily.

It localises to the cell membrane. It catalyses the reaction GTP + H2O = GDP + phosphate + H(+). In terms of biological role, required for accurate and efficient protein synthesis under certain stress conditions. May act as a fidelity factor of the translation reaction, by catalyzing a one-codon backward translocation of tRNAs on improperly translocated ribosomes. Back-translocation proceeds from a post-translocation (POST) complex to a pre-translocation (PRE) complex, thus giving elongation factor G a second chance to translocate the tRNAs correctly. Binds to ribosomes in a GTP-dependent manner. The protein is Elongation factor 4 of Clavibacter michiganensis subsp. michiganensis (strain NCPPB 382).